Here is a 1581-residue protein sequence, read N- to C-terminus: Pentafunctional AROM polypeptide (1581 aa).

The interval 1–384 is 3-dehydroquinate synthase; the sequence is MPEPTKISIL…YEPKASVVPN (384 aa). Residues 44 to 46, 81 to 84, 114 to 116, and Asp-119 contribute to the NAD(+) site; these read DTN, EVSK, and GGV. Arg-130 is a 7-phospho-2-dehydro-3-deoxy-D-arabino-heptonate binding site. An NAD(+)-binding site is contributed by 139–140; it reads TT. 7-phospho-2-dehydro-3-deoxy-D-arabino-heptonate contacts are provided by Asp-146 and Lys-152. Lys-161 serves as a coordination point for NAD(+). Asn-162 provides a ligand contact to 7-phospho-2-dehydro-3-deoxy-D-arabino-heptonate. NAD(+) is bound by residues 179–182 and Asn-190; that span reads FLET. A Zn(2+)-binding site is contributed by Glu-194. 7-phospho-2-dehydro-3-deoxy-D-arabino-heptonate contacts are provided by residues 194 to 197 and Lys-250; that span reads EVIK. The active-site Proton acceptor; for 3-dehydroquinate synthase activity is Glu-260. Residues 264–268 and His-271 each bind 7-phospho-2-dehydro-3-deoxy-D-arabino-heptonate; that span reads RNLLN. His-271 is a binding site for Zn(2+). His-275 serves as the catalytic Proton acceptor; for 3-dehydroquinate synthase activity. Residues His-287 and Lys-356 each coordinate 7-phospho-2-dehydro-3-deoxy-D-arabino-heptonate. Zn(2+) is bound at residue His-287. The interval 397–842 is EPSP synthase; that stretch reads VHPGVPKESN…WDTLRQLFSV (446 aa). Cys-824 serves as the catalytic For EPSP synthase activity. The tract at residues 864–1056 is shikimate kinase; that stretch reads SASVFIIGMR…KQKKHSFFVS (193 aa). 871-878 is a binding site for ATP; sequence GMRGAGKT. Residues 1057 to 1277 are 3-dehydroquinase; that stretch reads LTLPDLRSAS…AAPGQLSATE (221 aa). The Proton acceptor; for 3-dehydroquinate dehydratase activity role is filled by His-1180. The Schiff-base intermediate with substrate; for 3-dehydroquinate dehydratase activity role is filled by Lys-1208. The interval 1290 to 1581 is shikimate dehydrogenase; sequence KKRFAIFGNP…ARTAVLGDSA (292 aa).

It in the N-terminal section; belongs to the sugar phosphate cyclases superfamily. Dehydroquinate synthase family. The protein in the 2nd section; belongs to the EPSP synthase family. In the 3rd section; belongs to the shikimate kinase family. This sequence in the 4th section; belongs to the type-I 3-dehydroquinase family. It in the C-terminal section; belongs to the shikimate dehydrogenase family. As to quaternary structure, homodimer. Zn(2+) serves as cofactor.

It localises to the cytoplasm. It carries out the reaction 7-phospho-2-dehydro-3-deoxy-D-arabino-heptonate = 3-dehydroquinate + phosphate. The enzyme catalyses 3-dehydroquinate = 3-dehydroshikimate + H2O. It catalyses the reaction shikimate + NADP(+) = 3-dehydroshikimate + NADPH + H(+). The catalysed reaction is shikimate + ATP = 3-phosphoshikimate + ADP + H(+). It carries out the reaction 3-phosphoshikimate + phosphoenolpyruvate = 5-O-(1-carboxyvinyl)-3-phosphoshikimate + phosphate. Its pathway is metabolic intermediate biosynthesis; chorismate biosynthesis; chorismate from D-erythrose 4-phosphate and phosphoenolpyruvate: step 2/7. It functions in the pathway metabolic intermediate biosynthesis; chorismate biosynthesis; chorismate from D-erythrose 4-phosphate and phosphoenolpyruvate: step 3/7. The protein operates within metabolic intermediate biosynthesis; chorismate biosynthesis; chorismate from D-erythrose 4-phosphate and phosphoenolpyruvate: step 4/7. It participates in metabolic intermediate biosynthesis; chorismate biosynthesis; chorismate from D-erythrose 4-phosphate and phosphoenolpyruvate: step 5/7. Its pathway is metabolic intermediate biosynthesis; chorismate biosynthesis; chorismate from D-erythrose 4-phosphate and phosphoenolpyruvate: step 6/7. The AROM polypeptide catalyzes 5 consecutive enzymatic reactions in prechorismate polyaromatic amino acid biosynthesis. The protein is Pentafunctional AROM polypeptide of Aspergillus terreus (strain NIH 2624 / FGSC A1156).